Here is a 211-residue protein sequence, read N- to C-terminus: Claudin-7 (211 aa).

The Cytoplasmic portion of the chain corresponds to 1–7; it reads MANSGLQ. The chain crosses the membrane as a helical span at residues 8–28; the sequence is LLGFSMAMLGWVGLIASTAIP. The Extracellular portion of the chain corresponds to 29 to 81; it reads QWQMSSYAGDNIITAQAMYKGLWMECVTQSTGMMSCKMYDSVLALPGALQATR. The chain crosses the membrane as a helical span at residues 82–102; that stretch reads ALMVVSLVLGFLAMFVATMGM. The Cytoplasmic portion of the chain corresponds to 103–119; it reads KCTRCGGDDKAKKARIA. The helical transmembrane segment at 120–140 threads the bilayer; it reads MTGGIVFIVAGLAALVACSWI. Residues 141 to 160 are Extracellular-facing; it reads GHQIVTDFYNPLTPMNVKYE. A helical membrane pass occupies residues 161 to 181; sequence FGPAIFIGWAGSALVLLGGAL. The Cytoplasmic segment spans residues 182–211; the sequence is LSCSCPGSESKAAYRAPRSYPKSNSSKEYV. The interactions with TJP1, TJP2 and TJP3 stretch occupies residues 210-211; that stretch reads YV.

Belongs to the claudin family. In terms of assembly, directly interacts with TJP1/ZO-1, TJP2/ZO-2 and TJP3/ZO-3. The phosphorylated form interacts with EPCAM. Post-translationally, phosphorylated. Expressed predominantly in lung and kidney.

The protein localises to the cell membrane. Its subcellular location is the basolateral cell membrane. It localises to the cell junction. The protein resides in the tight junction. Its function is as follows. Plays a major role in tight junction-specific obliteration of the intercellular space, through calcium-independent cell-adhesion activity. The polypeptide is Claudin-7 (Cldn7) (Mus musculus (Mouse)).